Reading from the N-terminus, the 256-residue chain is Thiazole synthase (256 aa).

K95 acts as the Schiff-base intermediate with DXP in catalysis. Residues G156, 182–183 (AG), and 204–205 (NT) each bind 1-deoxy-D-xylulose 5-phosphate.

This sequence belongs to the ThiG family. As to quaternary structure, homotetramer. Forms heterodimers with either ThiH or ThiS.

It localises to the cytoplasm. The catalysed reaction is [ThiS sulfur-carrier protein]-C-terminal-Gly-aminoethanethioate + 2-iminoacetate + 1-deoxy-D-xylulose 5-phosphate = [ThiS sulfur-carrier protein]-C-terminal Gly-Gly + 2-[(2R,5Z)-2-carboxy-4-methylthiazol-5(2H)-ylidene]ethyl phosphate + 2 H2O + H(+). It participates in cofactor biosynthesis; thiamine diphosphate biosynthesis. Catalyzes the rearrangement of 1-deoxy-D-xylulose 5-phosphate (DXP) to produce the thiazole phosphate moiety of thiamine. Sulfur is provided by the thiocarboxylate moiety of the carrier protein ThiS. In vitro, sulfur can be provided by H(2)S. In Citrobacter koseri (strain ATCC BAA-895 / CDC 4225-83 / SGSC4696), this protein is Thiazole synthase.